A 133-amino-acid polypeptide reads, in one-letter code: Small ribosomal subunit protein uS9 (133 aa).

It belongs to the universal ribosomal protein uS9 family.

The chain is Small ribosomal subunit protein uS9 from Ureaplasma parvum serovar 3 (strain ATCC 700970).